A 205-amino-acid polypeptide reads, in one-letter code: Thymidylate kinase (205 aa).

An ATP-binding site is contributed by 10-17 (GIDGAGKS).

The protein belongs to the thymidylate kinase family.

The catalysed reaction is dTMP + ATP = dTDP + ADP. Phosphorylation of dTMP to form dTDP in both de novo and salvage pathways of dTTP synthesis. The protein is Thymidylate kinase of Ralstonia nicotianae (strain ATCC BAA-1114 / GMI1000) (Ralstonia solanacearum).